A 92-amino-acid chain; its full sequence is Small ribosomal subunit protein uS19 (92 aa).

Belongs to the universal ribosomal protein uS19 family.

Functionally, protein S19 forms a complex with S13 that binds strongly to the 16S ribosomal RNA. This Shewanella halifaxensis (strain HAW-EB4) protein is Small ribosomal subunit protein uS19.